The chain runs to 611 residues: Probable potassium transport system protein Kup 1 (611 aa).

The next 12 membrane-spanning stretches (helical) occupy residues 6–26 (LMVG…LYTM), 44–64 (MLSL…VAVV), 90–110 (LGVI…GAIT), 129–149 (ISPY…ALQA), 158–178 (LFGP…LFGI), 193–213 (GLSY…AVFL), 237–257 (WYGL…AVVV), 280–300 (LVAL…SGAF), 328–348 (IYIG…TLGF), 354–374 (LAAA…ILMF), 385–405 (LAAS…FVSA), and 410–430 (VLEG…LMMT).

It belongs to the HAK/KUP transporter (TC 2.A.72) family.

The protein resides in the cell inner membrane. The catalysed reaction is K(+)(in) + H(+)(in) = K(+)(out) + H(+)(out). Functionally, transport of potassium into the cell. Likely operates as a K(+):H(+) symporter. The protein is Probable potassium transport system protein Kup 1 of Bradyrhizobium sp. (strain BTAi1 / ATCC BAA-1182).